Here is a 389-residue protein sequence, read N- to C-terminus: 5-hydroxytryptamine receptor 1B (389 aa).

Residues 1–45 (MGNPEASCTPPAVLGSQTGLPHANVSAPPNNCSAPSHIYQDSIAL) are Extracellular-facing. N-linked (GlcNAc...) asparagine glycosylation is found at Asn24 and Asn31. The helical transmembrane segment at 46-71 (PWKVLLVVLLALITLATTLSNAFVIA) threads the bilayer. At 72–85 (TVYRTRKLHTPANY) the chain is on the cytoplasmic side. Residues 86–110 (LIASLAFTDLLVSILVMPISTMYTV) form a helical membrane-spanning segment. Residues 111-118 (TGRWTLGQ) are Extracellular-facing. The helical transmembrane segment at 119 to 144 (ALCDFWLSSDITCCTASIMHLCVIAL) threads the bilayer. Cys121 and Cys198 form a disulfide bridge. Positions 128 and 133 each coordinate ergotamine. The short motif at 145 to 147 (DRY) is the DRY motif; important for ligand-induced conformation changes and signaling element. The Cytoplasmic segment spans residues 145 to 164 (DRYWAITDAVGYSAKRTPRR). A helical membrane pass occupies residues 165-183 (AAGMIALVWVFSICISLPP). Over 184–204 (FFWRQAKAEEEVLDCLVNTDH) the chain is Extracellular. Val200 lines the ergotamine pocket. A helical membrane pass occupies residues 205 to 228 (VLYTVYSTGGAFYLPTLLLIALYG). Residues 229–314 (RIYVEARSRI…AARERKATKT (86 aa)) are Cytoplasmic-facing. Residues 315–336 (LGVILGAFIVCWLPFFIISLVM) form a helical membrane-spanning segment. The Extracellular portion of the chain corresponds to 337–346 (PICKDACWFH). A helical membrane pass occupies residues 347 to 369 (MAIFDFFTWLGYLNSLINPIIYT). Residues 364–368 (NPIIY) carry the NPxxY motif; important for ligand-induced conformation changes and signaling motif. Topologically, residues 370 to 389 (MSNEDFKQAFHKLIRFKCTT) are cytoplasmic. Residue Cys387 is the site of S-palmitoyl cysteine attachment.

The protein belongs to the G-protein coupled receptor 1 family. In terms of assembly, homodimer. Heterodimer with HTR1D. Phosphorylated. Desensitization of the receptor may be mediated by its phosphorylation. In terms of processing, palmitoylated.

Its subcellular location is the cell membrane. Its function is as follows. G-protein coupled receptor for 5-hydroxytryptamine (serotonin). Also functions as a receptor for ergot alkaloid derivatives, various anxiolytic and antidepressant drugs and other psychoactive substances, such as lysergic acid diethylamide (LSD). Ligand binding causes a conformation change that triggers signaling via guanine nucleotide-binding proteins (G proteins) and modulates the activity of downstream effectors, such as adenylate cyclase. HTR1B is coupled to G(i)/G(o) G alpha proteins and mediates inhibitory neurotransmission by inhibiting adenylate cyclase activity. Arrestin family members inhibit signaling via G proteins and mediate activation of alternative signaling pathways. Regulates the release of 5-hydroxytryptamine, dopamine and acetylcholine in the brain, and thereby affects neural activity, nociceptive processing, pain perception, mood and behavior. Besides, plays a role in vasoconstriction of cerebral arteries. The protein is 5-hydroxytryptamine receptor 1B (HTR1B) of Cavia porcellus (Guinea pig).